The chain runs to 492 residues: Adenosylhomocysteinase (492 aa).

Residues threonine 68, aspartate 153, and glutamate 215 each contribute to the substrate site. NAD(+) is bound at residue 216–218 (TTT). Lysine 245 and aspartate 249 together coordinate substrate. NAD(+)-binding positions include asparagine 250, 279–284 (GYGDVG), glutamate 302, asparagine 337, 358–360 (IGH), and asparagine 406.

This sequence belongs to the adenosylhomocysteinase family. NAD(+) serves as cofactor.

It localises to the cytoplasm. It catalyses the reaction S-adenosyl-L-homocysteine + H2O = L-homocysteine + adenosine. It functions in the pathway amino-acid biosynthesis; L-homocysteine biosynthesis; L-homocysteine from S-adenosyl-L-homocysteine: step 1/1. Functionally, may play a key role in the regulation of the intracellular concentration of adenosylhomocysteine. This is Adenosylhomocysteinase from Mycobacterium ulcerans (strain Agy99).